The primary structure comprises 210 residues: Redox-sensing transcriptional repressor Rex (210 aa).

The H-T-H motif DNA-binding region spans 16 to 55 (IYSRYLRQLIEEGVETVSSGEIAAGVGVSSAQVRKDLAYF). Residue 90-95 (GAGKLG) coordinates NAD(+).

The protein belongs to the transcriptional regulatory Rex family. As to quaternary structure, homodimer.

The protein resides in the cytoplasm. In terms of biological role, modulates transcription in response to changes in cellular NADH/NAD(+) redox state. This chain is Redox-sensing transcriptional repressor Rex, found in Syntrophomonas wolfei subsp. wolfei (strain DSM 2245B / Goettingen).